A 521-amino-acid polypeptide reads, in one-letter code: Fucosyltransferase 3 (521 aa).

Residues 1–12 are compositionally biased toward basic and acidic residues; the sequence is MKRGKKNSDAGD. The interval 1–29 is disordered; it reads MKRGKKNSDAGDRLTNSDTRTGSSELNAM. The Cytoplasmic segment spans residues 1 to 39; sequence MKRGKKNSDAGDRLTNSDTRTGSSELNAMMKPSLSSMKT. Over residues 14 to 26 the composition is skewed to polar residues; it reads LTNSDTRTGSSEL. The helical; Signal-anchor for type II membrane protein transmembrane segment at 40–60 threads the bilayer; the sequence is MGLLLAVLMVASVMFSLSVVL. Over 61-521 the chain is Lumenal; that stretch reads RDPPSDDVIE…QATLFHGCKD (461 aa). 3 N-linked (GlcNAc...) asparagine glycosylation sites follow: asparagine 152, asparagine 222, and asparagine 493.

The protein belongs to the glycosyltransferase 37 family. In terms of tissue distribution, expressed in roots, stems, leaves, flowers, siliques and seedlings.

It is found in the golgi apparatus. It localises to the golgi stack membrane. It functions in the pathway protein modification; protein glycosylation. In terms of biological role, may be involved in cell wall biosynthesis. May act as a fucosyltransferase. The chain is Fucosyltransferase 3 (FUT3) from Arabidopsis thaliana (Mouse-ear cress).